Here is a 447-residue protein sequence, read N- to C-terminus: GTPase Der (447 aa).

EngA-type G domains are found at residues 3 to 167 (PVIA…ALPE) and 180 to 353 (IRLA…KSAN). GTP is bound by residues 9–16 (GRPNVGKS), 56–60 (DTGGF), 119–122 (NKAE), 186–193 (GRPNVGKS), 233–237 (DTAGL), and 298–301 (NKWD). The 85-residue stretch at 354–438 (RKMPTPVLTR…PLRIEMKTSS (85 aa)) folds into the KH-like domain.

The protein belongs to the TRAFAC class TrmE-Era-EngA-EngB-Septin-like GTPase superfamily. EngA (Der) GTPase family. In terms of assembly, associates with the 50S ribosomal subunit.

GTPase that plays an essential role in the late steps of ribosome biogenesis. The sequence is that of GTPase Der from Acidovorax sp. (strain JS42).